Consider the following 309-residue polypeptide: MRIQTDAVNVVSRASSYLLSGLLKRKPLWFDVVAKYPPKQNLIKVPYIQSKENKDPRNDQFELKKRDRKRPLSALYQTRASKMENGNLNRKIHRIPKLKFLEDEIRDYFHLRHPWENARPKTLVENSGDEVLRKCDWSRMLQLYKPLDGESVVQRTMYILQNDPEVKDVFEAYDIARFEYYKLRMAEEMESHVAKEESVMHGAVFESTHLDWNLTTEQKYIDDWVKIASEKTQVLEANRSKSNAPAGSMGGEEVEAAQVSIFEVFCKLVHQRELKVSKERRSRVQQKTHEETSRALYIIEMKMKRILEK.

It belongs to the mitochondrion-specific ribosomal protein mS23 family. Component of the mitochondrial small ribosomal subunit.

It localises to the mitochondrion. The polypeptide is Small ribosomal subunit protein mS23 (RSM25) (Lodderomyces elongisporus (strain ATCC 11503 / CBS 2605 / JCM 1781 / NBRC 1676 / NRRL YB-4239) (Yeast)).